The chain runs to 177 residues: MFQKFISKHNAPINSTQLAATKTPAVAAPVLSVPNLSRSTILINATTTAVTTHSGLCHVVRIDETNPTNHHALSIAGSLSNVPADMIAFAIRFEVADGVVPTAVPALYDVYPIETFNNGKAISFKDAVTIDSHPRTVGNDVYAGIMLWSNAWTASTISGVLSVNQVNREATVLQPLK.

The protein belongs to the microvirus G protein family. The virion is composed of 60 copies each of the F, G, and J proteins, and 12 copies of the H protein. There are 12 spikes which are each composed of 5 G and one H proteins.

The protein localises to the virion. Functionally, attaches the circulating virion to the bacterial lipopolysaccharides which serve as receptor for the virus. Determines the phage host-range. Probably triggers with protein H the injection of the phage DNA into the host cytoplasm upon conformational changes induced by the interaction with host lipopolysaccharides. This is Major spike protein G (G) from Escherichia phage G4 (Bacteriophage G4).